The chain runs to 172 residues: MIRNIGSNLMKSSSSILLRNQQQQTNKLLFRNFTSIPEAVAVTSEESYNSKNQFTPIGKDSFAVVHISGKQYKVIEGDIIMTDKIQVDVGEHIVLDKVLLVGTKNETIIGKPIISNFKVHAYIEEQAKTEHVTIFKHKPRKNYKRTTGFQGLATYIRIGGIIKGQETTTTTN.

Residues 1 to 20 constitute a mitochondrion transit peptide; it reads MIRNIGSNLMKSSSSILLRN.

It belongs to the bacterial ribosomal protein bL21 family.

The protein localises to the mitochondrion. This chain is Large ribosomal subunit protein bL21m (mrpl21), found in Dictyostelium discoideum (Social amoeba).